The chain runs to 338 residues: Solute-binding protein Rfer_1840 (338 aa).

The first 25 residues, 1–25 (MQRRQLLQSMGGLAASTMPFSLAFA), serve as a signal peptide directing secretion. Residues arginine 47, tyrosine 100, arginine 175, serine 197, 214-218 (TSSTS), and glutamate 244 each bind malonate.

Belongs to the bacterial solute-binding protein 7 family. As to quaternary structure, the complex is comprised of an extracytoplasmic solute-binding protein and a heteromeric permease formed by two transmembrane proteins.

Its subcellular location is the periplasm. Functionally, solute-binding protein that binds malonate (in vitro). Probably part of a tripartite ATP-independent periplasmic (TRAP) transport system that mediates solute transport into the cytoplasm. This is Solute-binding protein Rfer_1840 from Albidiferax ferrireducens (strain ATCC BAA-621 / DSM 15236 / T118) (Rhodoferax ferrireducens).